The primary structure comprises 595 residues: Myb-like protein D (595 aa).

Disordered regions lie at residues M1–V47, Q55–E74, D82–K266, and V319–Q445. Low complexity predominate over residues D19–V47. Positions D60 to E74 are enriched in acidic residues. 2 stretches are compositionally biased toward low complexity: residues N90 to N212 and N225 to N264. The segment covering T324–S348 has biased composition (basic residues). Low complexity-rich tracts occupy residues R349 to S368 and N376 to N420. The span at R423–K434 shows a compositional bias: basic and acidic residues. Residues K435–K489 enclose the HTH myb-type domain. The segment at residues W462 to I485 is a DNA-binding region (H-T-H motif). The tract at residues H494–N595 is disordered. Low complexity predominate over residues Q517 to N595.

It localises to the nucleus. The polypeptide is Myb-like protein D (mybD) (Dictyostelium discoideum (Social amoeba)).